Consider the following 1070-residue polypeptide: DNA-directed RNA polymerase subunit beta (1070 aa).

This sequence belongs to the RNA polymerase beta chain family. As to quaternary structure, in plastids the minimal PEP RNA polymerase catalytic core is composed of four subunits: alpha, beta, beta', and beta''. When a (nuclear-encoded) sigma factor is associated with the core the holoenzyme is formed, which can initiate transcription.

The protein resides in the plastid. Its subcellular location is the chloroplast. The enzyme catalyses RNA(n) + a ribonucleoside 5'-triphosphate = RNA(n+1) + diphosphate. Its function is as follows. DNA-dependent RNA polymerase catalyzes the transcription of DNA into RNA using the four ribonucleoside triphosphates as substrates. The sequence is that of DNA-directed RNA polymerase subunit beta from Nicotiana tomentosiformis (Tobacco).